The sequence spans 462 residues: L-seryl-tRNA(Sec) selenium transferase (462 aa).

The residue at position 293 (Lys293) is an N6-(pyridoxal phosphate)lysine.

This sequence belongs to the SelA family. It depends on pyridoxal 5'-phosphate as a cofactor.

It is found in the cytoplasm. It carries out the reaction L-seryl-tRNA(Sec) + selenophosphate + H(+) = L-selenocysteinyl-tRNA(Sec) + phosphate. It functions in the pathway aminoacyl-tRNA biosynthesis; selenocysteinyl-tRNA(Sec) biosynthesis; selenocysteinyl-tRNA(Sec) from L-seryl-tRNA(Sec) (bacterial route): step 1/1. In terms of biological role, converts seryl-tRNA(Sec) to selenocysteinyl-tRNA(Sec) required for selenoprotein biosynthesis. The polypeptide is L-seryl-tRNA(Sec) selenium transferase (Clostridium botulinum (strain Loch Maree / Type A3)).